The primary structure comprises 448 residues: Probable glycine dehydrogenase (decarboxylating) subunit 1 (448 aa).

This sequence belongs to the GcvP family. N-terminal subunit subfamily. In terms of assembly, the glycine cleavage system is composed of four proteins: P, T, L and H. In this organism, the P 'protein' is a heterodimer of two subunits.

It catalyses the reaction N(6)-[(R)-lipoyl]-L-lysyl-[glycine-cleavage complex H protein] + glycine + H(+) = N(6)-[(R)-S(8)-aminomethyldihydrolipoyl]-L-lysyl-[glycine-cleavage complex H protein] + CO2. Functionally, the glycine cleavage system catalyzes the degradation of glycine. The P protein binds the alpha-amino group of glycine through its pyridoxal phosphate cofactor; CO(2) is released and the remaining methylamine moiety is then transferred to the lipoamide cofactor of the H protein. In Geobacillus sp. (strain WCH70), this protein is Probable glycine dehydrogenase (decarboxylating) subunit 1.